The following is a 632-amino-acid chain: DNA ligase (632 aa).

NAD(+)-binding positions include 45–49 and 89–90; these read NEDYD and SI. Catalysis depends on Lys127, which acts as the N6-AMP-lysine intermediate. Arg143, Glu174, and Lys286 together coordinate NAD(+). Residues Cys374, Cys377, Cys390, and Cys396 each coordinate Zn(2+). In terms of domain architecture, BRCT spans 561–632; the sequence is DKRIVFTGKM…EADYLSKITM (72 aa).

Belongs to the NAD-dependent DNA ligase family. LigA subfamily. Requires Mg(2+) as cofactor. Mn(2+) is required as a cofactor.

The catalysed reaction is NAD(+) + (deoxyribonucleotide)n-3'-hydroxyl + 5'-phospho-(deoxyribonucleotide)m = (deoxyribonucleotide)n+m + AMP + beta-nicotinamide D-nucleotide.. In terms of biological role, DNA ligase that catalyzes the formation of phosphodiester linkages between 5'-phosphoryl and 3'-hydroxyl groups in double-stranded DNA using NAD as a coenzyme and as the energy source for the reaction. It is essential for DNA replication and repair of damaged DNA. The chain is DNA ligase from Vesicomyosocius okutanii subsp. Calyptogena okutanii (strain HA).